Consider the following 322-residue polypeptide: Pantothenate kinase (322 aa).

Residue 100–107 coordinates ATP; that stretch reads GSVAVGKS.

The protein belongs to the prokaryotic pantothenate kinase family.

Its subcellular location is the cytoplasm. The enzyme catalyses (R)-pantothenate + ATP = (R)-4'-phosphopantothenate + ADP + H(+). It participates in cofactor biosynthesis; coenzyme A biosynthesis; CoA from (R)-pantothenate: step 1/5. This Brucella canis (strain ATCC 23365 / NCTC 10854 / RM-666) protein is Pantothenate kinase.